Here is a 617-residue protein sequence, read N- to C-terminus: UvrABC system protein C (617 aa).

A GIY-YIG domain is found at 22–100 (KLPGVYRFFD…IKALSPKYNI (79 aa)). Residues 209–244 (DELTRTLQHKMQTAAANLQFEEAARYRDQIQALGII) form the UVR domain.

This sequence belongs to the UvrC family. As to quaternary structure, interacts with UvrB in an incision complex.

The protein resides in the cytoplasm. The UvrABC repair system catalyzes the recognition and processing of DNA lesions. UvrC both incises the 5' and 3' sides of the lesion. The N-terminal half is responsible for the 3' incision and the C-terminal half is responsible for the 5' incision. This is UvrABC system protein C from Neisseria gonorrhoeae (strain ATCC 700825 / FA 1090).